The following is a 261-amino-acid chain: 4-hydroxy-tetrahydrodipicolinate reductase (261 aa).

NAD(+) contacts are provided by residues 11-16 (GFTGAM), 96-98 (GTT), and 122-125 (APNF). Residue histidine 152 is the Proton donor/acceptor of the active site. Histidine 153 lines the (S)-2,3,4,5-tetrahydrodipicolinate pocket. Lysine 156 acts as the Proton donor in catalysis. Residue 162 to 163 (GT) coordinates (S)-2,3,4,5-tetrahydrodipicolinate.

The protein belongs to the DapB family.

Its subcellular location is the cytoplasm. It catalyses the reaction (S)-2,3,4,5-tetrahydrodipicolinate + NAD(+) + H2O = (2S,4S)-4-hydroxy-2,3,4,5-tetrahydrodipicolinate + NADH + H(+). The enzyme catalyses (S)-2,3,4,5-tetrahydrodipicolinate + NADP(+) + H2O = (2S,4S)-4-hydroxy-2,3,4,5-tetrahydrodipicolinate + NADPH + H(+). The protein operates within amino-acid biosynthesis; L-lysine biosynthesis via DAP pathway; (S)-tetrahydrodipicolinate from L-aspartate: step 4/4. Catalyzes the conversion of 4-hydroxy-tetrahydrodipicolinate (HTPA) to tetrahydrodipicolinate. The polypeptide is 4-hydroxy-tetrahydrodipicolinate reductase (Lactobacillus acidophilus (strain ATCC 700396 / NCK56 / N2 / NCFM)).